A 619-amino-acid chain; its full sequence is Glucokinase regulatory protein (619 aa).

SIS domains lie at 90–283 (VQEV…AESN) and 319–498 (TATS…LRGK). 107–109 (CGT) is a keto-D-fructose 6-phosphate binding site. Beta-D-fructose 1-phosphate contacts are provided by residues 109 to 110 (TS), Glu-153, 179 to 181 (SCG), and Glu-347. Residues 179–183 (SCGLS) and Glu-347 contribute to the keto-D-fructose 6-phosphate site. Positions 462–464 (ILF) are essential for interaction with GCK. Lys-513 contacts keto-D-fructose 6-phosphate. Residue Lys-513 participates in beta-D-fructose 1-phosphate binding.

The protein belongs to the GCKR family. As to quaternary structure, interacts (fructose 6-phosphate bound form) with gck.

The protein localises to the nucleus. It is found in the cytoplasm. The protein resides in the mitochondrion. Regulates glucokinase (gck) by forming an inactive complex with this enzyme. The affinity of gckr for gck is modulated by fructose metabolites: gckr with bound fructose 6-phosphate has increased affinity for gck, while gckr with bound fructose 1-phosphate has strongly decreased affinity for gck and does not inhibit gck activity. The chain is Glucokinase regulatory protein from Xenopus laevis (African clawed frog).